A 244-amino-acid polypeptide reads, in one-letter code: CTD nuclear envelope phosphatase 1 (244 aa).

A helical membrane pass occupies residues 7 to 29; that stretch reads LLGLRGFVAFAAKLWSFVLYLLR. Residues 58 to 225 form the FCP1 homology domain; the sequence is QVKRKVLVLD…NLLPMLDALR (168 aa).

The protein belongs to the dullard family. In terms of assembly, interacts with bmpr1a, bmpr1b and bmpr2.

Its subcellular location is the membrane. It localises to the cytoplasm. The protein resides in the perinuclear region. It carries out the reaction O-phospho-L-seryl-[protein] + H2O = L-seryl-[protein] + phosphate. The catalysed reaction is O-phospho-L-threonyl-[protein] + H2O = L-threonyl-[protein] + phosphate. In terms of biological role, serine/threonine protein phosphatase that may dephosphorylate and activate lipins. Lipins are phosphatidate phosphatases that catalyze the conversion of phosphatidic acid to diacylglycerol and control the metabolism of fatty acids at different levels. May indirectly modulate the lipid composition of nuclear and/or endoplasmic reticulum membranes and be required for proper nuclear membrane morphology and/or dynamics. May also indirectly regulate the production of lipid droplets and triacylglycerol. Induces neuronal differentiation by antagonizing BMP signaling. Acts both by dephosphorylating BMPR1A and by promoting BMPR2 proteasomal degradation. In Xenopus laevis (African clawed frog), this protein is CTD nuclear envelope phosphatase 1 (ctdnep1).